We begin with the raw amino-acid sequence, 396 residues long: ATP-dependent RNA helicase eIF4A (396 aa).

The disordered stretch occupies residues 1 to 20; that stretch reads MADKGLEDVPEGQIESNYDE. A Q motif motif is present at residues 23–51; that stretch reads DSFDAMNLKAELLRGVYAYGFERPSAIQQ. Residues 54–224 enclose the Helicase ATP-binding domain; it reads IMPVIKGHDV…TKFMRDPVRI (171 aa). Position 67–74 (67–74) interacts with ATP; sequence AQSGTGKT. The DEAD box signature appears at 172–175; it reads DEAD. The Helicase C-terminal domain occupies 235–396; the sequence is GIKQFYIAVE…EMPMNVADLI (162 aa).

The protein belongs to the DEAD box helicase family. eIF4A subfamily. As to quaternary structure, component of the eIF4F complex, which composition varies with external and internal environmental conditions. It is composed of at least eIF4A, eIF4E and eIF4G.

It is found in the cytoplasm. The enzyme catalyses ATP + H2O = ADP + phosphate + H(+). Its function is as follows. ATP-dependent RNA helicase which is a subunit of the eIF4F complex involved in cap recognition and is required for mRNA binding to ribosome. In the current model of translation initiation, eIF4A unwinds RNA secondary structures in the 5'-UTR of mRNAs which is necessary to allow efficient binding of the small ribosomal subunit, and subsequent scanning for the initiator codon. In Phaeosphaeria nodorum (strain SN15 / ATCC MYA-4574 / FGSC 10173) (Glume blotch fungus), this protein is ATP-dependent RNA helicase eIF4A (TIF1).